Here is a 562-residue protein sequence, read N- to C-terminus: Arginine--tRNA ligase (562 aa).

Positions 129–139 (ANPTGPLHVGH) match the 'HIGH' region motif.

This sequence belongs to the class-I aminoacyl-tRNA synthetase family. Monomer.

It localises to the cytoplasm. The catalysed reaction is tRNA(Arg) + L-arginine + ATP = L-arginyl-tRNA(Arg) + AMP + diphosphate. The polypeptide is Arginine--tRNA ligase (Xanthomonas campestris pv. campestris (strain B100)).